A 264-amino-acid polypeptide reads, in one-letter code: tRNA (guanine-N(1)-)-methyltransferase (264 aa).

S-adenosyl-L-methionine is bound by residues Gly-116 and 136–141 (VGDFVL).

The protein belongs to the RNA methyltransferase TrmD family. Homodimer.

Its subcellular location is the cytoplasm. The catalysed reaction is guanosine(37) in tRNA + S-adenosyl-L-methionine = N(1)-methylguanosine(37) in tRNA + S-adenosyl-L-homocysteine + H(+). Functionally, specifically methylates guanosine-37 in various tRNAs. The protein is tRNA (guanine-N(1)-)-methyltransferase of Koribacter versatilis (strain Ellin345).